Reading from the N-terminus, the 907-residue chain is Protein MEI2-like 4 (907 aa).

The disordered stretch occupies residues 28–58 (QFGFMKNNPMPEGGVDRSSNLPTSSWTSDSY). Residues 44 to 54 (RSSNLPTSSWT) are compositionally biased toward polar residues. 2 RRM domains span residues 211 to 284 (RILF…YSIP) and 295 to 368 (GALW…PTCP). Residues 856-907 (AGPNAGDQEPFPMGSNIRSRPGKHRTNSIENYTNFSSSSDNRDEPANGNDSM) are disordered. A compositionally biased stretch (polar residues) spans 883–894 (SIENYTNFSSSS).

In terms of biological role, probable RNA-binding protein that plays a role in meiosis and vegetative growth. This is Protein MEI2-like 4 (ML4) from Arabidopsis thaliana (Mouse-ear cress).